A 301-amino-acid polypeptide reads, in one-letter code: Pantothenate synthetase (301 aa).

ATP is bound at residue 30-37 (MGNLHEGH). Catalysis depends on His37, which acts as the Proton donor. Gln61 is a binding site for (R)-pantoate. Gln61 contributes to the beta-alanine binding site. 149–152 (GEKD) contacts ATP. Residue Gln155 participates in (R)-pantoate binding. ATP is bound by residues Val178 and 186 to 189 (MSSR).

This sequence belongs to the pantothenate synthetase family. Homodimer.

It localises to the cytoplasm. The catalysed reaction is (R)-pantoate + beta-alanine + ATP = (R)-pantothenate + AMP + diphosphate + H(+). It participates in cofactor biosynthesis; (R)-pantothenate biosynthesis; (R)-pantothenate from (R)-pantoate and beta-alanine: step 1/1. Catalyzes the condensation of pantoate with beta-alanine in an ATP-dependent reaction via a pantoyl-adenylate intermediate. The chain is Pantothenate synthetase from Vibrio vulnificus (strain YJ016).